Here is a 107-residue protein sequence, read N- to C-terminus: Integration host factor subunit alpha (107 aa).

This sequence belongs to the bacterial histone-like protein family. In terms of assembly, heterodimer of an alpha and a beta chain.

Its function is as follows. This protein is one of the two subunits of integration host factor, a specific DNA-binding protein that functions in genetic recombination as well as in transcriptional and translational control. This Bartonella tribocorum (strain CIP 105476 / IBS 506) protein is Integration host factor subunit alpha.